Consider the following 487-residue polypeptide: Nitrate reductase beta chain (487 aa).

4Fe-4S ferredoxin-type domains are found at residues 7 to 36 (IGMV…RSGA), 172 to 203 (VFMM…KREE), and 205 to 234 (GIVL…FNWQ). Cys16, Cys19, Cys22, Cys26, Cys181, Cys184, and Cys189 together coordinate [4Fe-4S] cluster. [3Fe-4S] cluster-binding residues include Cys193, Cys214, and Cys220. Cys224, Cys241, Cys244, Cys256, and Cys260 together coordinate [4Fe-4S] cluster.

[4Fe-4S] cluster is required as a cofactor. It depends on [3Fe-4S] cluster as a cofactor.

It is found in the cell membrane. The enzyme catalyses nitrate + a quinol = a quinone + nitrite + H2O. The beta chain is an electron transfer unit containing four cysteine clusters involved in the formation of iron-sulfur centers. Electrons are transferred from the gamma chain to the molybdenum cofactor of the alpha subunit. This chain is Nitrate reductase beta chain (narH), found in Bacillus subtilis (strain 168).